The following is a 423-amino-acid chain: L-cysteine:1D-myo-inositol 2-amino-2-deoxy-alpha-D-glucopyranoside ligase (423 aa).

Position 43 (Cys-43) interacts with Zn(2+). L-cysteinyl-5'-AMP contacts are provided by residues 43–46 (CGIT), Thr-58, and 81–83 (NVT). Residues 45–55 (ITPYDATHMGH) carry the 'HIGH' region motif. Positions 199–204 (ERGGDP) match the 'ERGGDP' region motif. Trp-240 serves as a coordination point for L-cysteinyl-5'-AMP. Zn(2+) is bound at residue Cys-244. Position 262–264 (262–264 (GSD)) interacts with L-cysteinyl-5'-AMP. His-269 contributes to the Zn(2+) binding site. Val-295 is a binding site for L-cysteinyl-5'-AMP. Positions 301-305 (KMSKS) match the 'KMSKS' region motif.

The protein belongs to the class-I aminoacyl-tRNA synthetase family. MshC subfamily. As to quaternary structure, monomer. The cofactor is Zn(2+).

The catalysed reaction is 1D-myo-inositol 2-amino-2-deoxy-alpha-D-glucopyranoside + L-cysteine + ATP = 1D-myo-inositol 2-(L-cysteinylamino)-2-deoxy-alpha-D-glucopyranoside + AMP + diphosphate + H(+). Functionally, catalyzes the ATP-dependent condensation of GlcN-Ins and L-cysteine to form L-Cys-GlcN-Ins. The polypeptide is L-cysteine:1D-myo-inositol 2-amino-2-deoxy-alpha-D-glucopyranoside ligase (Renibacterium salmoninarum (strain ATCC 33209 / DSM 20767 / JCM 11484 / NBRC 15589 / NCIMB 2235)).